The primary structure comprises 279 residues: Large ribosomal subunit protein uL2 (279 aa).

Disordered regions lie at residues 29 to 59 and 224 to 279; these read PEKSLLRPLHKTGGRNNSGKITTRHKGGGHK and VAMN…KNKR. The span at 50 to 59 shows a compositional bias: basic residues; it reads TTRHKGGGHK. Residues 253-268 are compositionally biased toward basic and acidic residues; that stretch reads PEGRTRRPNKESDKLI. Residues 269-279 are compositionally biased toward basic residues; it reads VRRRRTGKNKR.

Belongs to the universal ribosomal protein uL2 family. Part of the 50S ribosomal subunit. Forms a bridge to the 30S subunit in the 70S ribosome.

One of the primary rRNA binding proteins. Required for association of the 30S and 50S subunits to form the 70S ribosome, for tRNA binding and peptide bond formation. It has been suggested to have peptidyltransferase activity; this is somewhat controversial. Makes several contacts with the 16S rRNA in the 70S ribosome. This chain is Large ribosomal subunit protein uL2, found in Paenarthrobacter aurescens (strain TC1).